Here is a 567-residue protein sequence, read N- to C-terminus: D-lactate dehydrogenase [cytochrome], mitochondrial (567 aa).

A mitochondrion-targeting transit peptide spans 1 to 56 (MAFASKFARSKTILSFLRPCRQLHSTPKSTGDVTVLSPVKGRRRLPTCWSSSLFPL). The FAD-binding PCMH-type domain maps to 142–319 (AVNIPDVVVF…TEITLRLQKI (178 aa)).

This sequence belongs to the FAD-binding oxidoreductase/transferase type 4 family. In terms of assembly, homodimer. Requires FAD as cofactor. Expressed in leaves, stems, flowers and roots.

It is found in the mitochondrion. It carries out the reaction (R)-lactate + 2 Fe(III)-[cytochrome c] = 2 Fe(II)-[cytochrome c] + pyruvate + 2 H(+). Its activity is regulated as follows. Inhibited by cyanide ions. Catalyzes the stereospecific oxidation of D-lactate to pyruvate. Involved in the detoxification of methylglyoxal and D-lactate, but probably not involved in the metabolization of glycolate. This is D-lactate dehydrogenase [cytochrome], mitochondrial from Arabidopsis thaliana (Mouse-ear cress).